A 190-amino-acid polypeptide reads, in one-letter code: Putative CRISPR system CMR subunit Cmr7 2 (190 aa).

It belongs to the CRISPR system Cmr7 family. Homodimer.

In terms of biological role, CRISPR (clustered regularly interspaced short palindromic repeat) is an adaptive immune system that provides protection against mobile genetic elements (viruses, transposable elements and conjugative plasmids). CRISPR clusters contain spacers, sequences complementary to antecedent mobile elements, and target invading nucleic acids. CRISPR clusters are transcribed and processed into CRISPR RNA (crRNA). The sequence is that of Putative CRISPR system CMR subunit Cmr7 2 (cmr7b) from Saccharolobus solfataricus (strain ATCC 35092 / DSM 1617 / JCM 11322 / P2) (Sulfolobus solfataricus).